Reading from the N-terminus, the 591-residue chain is Aspartate--tRNA(Asp/Asn) ligase (591 aa).

Position 176 (Glu176) interacts with L-aspartate. The interval 200 to 203 (QLFK) is aspartate. Arg222 provides a ligand contact to L-aspartate. Residues 222-224 (RDE) and Gln231 each bind ATP. L-aspartate is bound at residue His450. Glu484 is a binding site for ATP. Arg491 is an L-aspartate binding site. ATP is bound at residue 536 to 539 (GLDR).

The protein belongs to the class-II aminoacyl-tRNA synthetase family. Type 1 subfamily. In terms of assembly, homodimer.

The protein localises to the cytoplasm. It carries out the reaction tRNA(Asx) + L-aspartate + ATP = L-aspartyl-tRNA(Asx) + AMP + diphosphate. Its function is as follows. Aspartyl-tRNA synthetase with relaxed tRNA specificity since it is able to aspartylate not only its cognate tRNA(Asp) but also tRNA(Asn). Reaction proceeds in two steps: L-aspartate is first activated by ATP to form Asp-AMP and then transferred to the acceptor end of tRNA(Asp/Asn). This is Aspartate--tRNA(Asp/Asn) ligase from Bacillus cereus (strain ATCC 10987 / NRS 248).